Consider the following 97-residue polypeptide: Signal recognition particle 19 kDa protein (97 aa).

It belongs to the SRP19 family. Part of the signal recognition particle protein translocation system, which is composed of SRP and FtsY. Archaeal SRP consists of a 7S RNA molecule of 300 nucleotides and two protein subunits: SRP54 and SRP19.

It localises to the cytoplasm. In terms of biological role, involved in targeting and insertion of nascent membrane proteins into the cytoplasmic membrane. Binds directly to 7S RNA and mediates binding of the 54 kDa subunit of the SRP. This is Signal recognition particle 19 kDa protein from Methanocella arvoryzae (strain DSM 22066 / NBRC 105507 / MRE50).